The primary structure comprises 392 residues: ATP phosphoribosyltransferase regulatory subunit (392 aa).

Belongs to the class-II aminoacyl-tRNA synthetase family. HisZ subfamily. In terms of assembly, heteromultimer composed of HisG and HisZ subunits.

It is found in the cytoplasm. Its pathway is amino-acid biosynthesis; L-histidine biosynthesis; L-histidine from 5-phospho-alpha-D-ribose 1-diphosphate: step 1/9. In terms of biological role, required for the first step of histidine biosynthesis. May allow the feedback regulation of ATP phosphoribosyltransferase activity by histidine. This Prochlorococcus marinus (strain MIT 9211) protein is ATP phosphoribosyltransferase regulatory subunit.